We begin with the raw amino-acid sequence, 2159 residues long: ATP-binding cassette sub-family A member 7 (2159 aa).

Residues 22-42 form a helical membrane-spanning segment; it reads PIQLLVELLWPLFLFFILVAV. The Extracellular segment spans residues 43 to 546; that stretch reads RHSHPPLEHH…DVFLRVLSRS (504 aa). A disulfide bond links Cys-75 and Cys-222. Residue Asn-309 is glycosylated (N-linked (GlcNAc...) asparagine). 6 consecutive transmembrane segments (helical) span residues 547 to 567, 590 to 610, 623 to 643, 652 to 672, 678 to 698, and 732 to 752; these read LPLF…KAVV, LGWF…LVLV, VVIF…SFLL, LAAA…VLCV, LHLG…GFGC, and AFLL…EAVC. An ABC transporter 1 domain is found at 804-1035; sequence VSIRGLKKHF…LGCGYYLTLV (232 aa). 838–845 lines the ATP pocket; sequence GHNGAGKT. Residues 846 to 866 form a helical membrane-spanning segment; sequence TTLSILSGLFPPSSGSASILG. 2 disordered regions span residues 1042–1088 and 1172–1192; these read VTHD…GAVP and GGDS…PTGP. Over residues 1044-1061 the composition is skewed to basic and acidic residues; that stretch reads HDAKGDSEDPRREKKSDG. Positions 1062-1081 are enriched in polar residues; it reads NGRTSDTAFTRGTSDKSNQA. The helical transmembrane segment at 1246-1266 threads the bilayer; sequence VVLPALFVGLALFFSLIVPPF. At 1267–1551 the chain is on the extracellular side; it reads GQYPPLQLSP…TLIASSVDVL (285 aa). Residues Cys-1359 and Cys-1373 are joined by a disulfide bond. Helical transmembrane passes span 1552–1572, 1598–1618, 1635–1655, 1663–1683, and 1743–1763; these read VSIC…LVLI, FLWD…IFLA, LLLL…SFFF, VVLT…TFVL, and IIGK…LITL. Residues 1807–2039 enclose the ABC transporter 2 domain; that stretch reads LVLRDLTKVY…FGAGHTLTLR (233 aa). 1841 to 1848 is a binding site for ATP; the sequence is GVNGAGKT. The interval 2118 to 2159 is disordered; it reads QGEEEESSRQEAEEEEVSKPGRQHPKRVSRFLEDPSSVETMI. The segment covering 2119 to 2133 has biased composition (acidic residues); the sequence is GEEEESSRQEAEEEE.

Belongs to the ABC transporter superfamily. ABCA family. In terms of processing, N-glycosylated. In terms of tissue distribution, widely expressed with higher expression in brain, lung, adrenal gland, spleen and hematopoietic tissues (at protein level). In the brain, expressed in cortex, cerebellum, hippocampus, olfactory bulb, neurons, astrocytes and microglia (at protein level). Also expressed in adipocytes and macrophages (at protein level). Expressed in thymocytes (at protein level). Highly expressed in spleen and hematopoietic tissues. Expressed in brain, lung, macrophages, microglia, oligodendrocytes and neurons.

The protein localises to the cell membrane. It is found in the golgi apparatus membrane. Its subcellular location is the early endosome membrane. The protein resides in the cytoplasm. It localises to the cell projection. The protein localises to the ruffle membrane. It is found in the phagocytic cup. Probable ATP-binding cassette (ABC) transporter that plays a role in lipid homeostasis and macrophage-mediated phagocytosis. Binds APOA1 and may function in apolipoprotein-mediated phospholipid efflux from cells. May also mediate cholesterol efflux. May regulate cellular ceramide homeostasis during keratinocyte differentiation. Involved in lipid raft organization and CD1D localization on thymocytes and antigen-presenting cells, which plays an important role in natural killer T-cell development and activation. Plays a role in phagocytosis of apoptotic cells by macrophages. Macrophage phagocytosis is stimulated by APOA1 or APOA2, probably by stabilization of ABCA7. Also involved in phagocytic clearance of amyloid-beta by microglia cells and macrophages. Further limits amyloid-beta production by playing a role in the regulation of amyloid-beta A4 precursor protein (APP) endocytosis and/or processing. The chain is ATP-binding cassette sub-family A member 7 (Abca7) from Mus musculus (Mouse).